A 682-amino-acid polypeptide reads, in one-letter code: Actin-binding LIM protein 3 (682 aa).

M1 is subject to N-acetylmethionine. 4 consecutive LIM zinc-binding domains span residues 21 to 80 (IQCY…LYGT), 80 to 140 (TRCD…MTSS), 149 to 208 (SHCA…QFGI), and 208 to 268 (IKCE…ARAE). Phosphoserine is present on residues S277, S280, S282, S286, S290, S337, S372, and S373. Disordered stretches follow at residues 372–426 (SSPG…SYQA) and 440–475 (YRKP…PAYS). Phosphotyrosine is present on Y376. A phosphoserine mark is found at S379 and S388. Polar residues-rich tracts occupy residues 380–393 (PTYS…TFSR), 405–425 (GRSS…TSYQ), and 453–466 (STAT…DISQ). Phosphoserine occurs at positions 492, 502, and 503. T542 is subject to Phosphothreonine. 3 positions are modified to phosphoserine: S566, S575, and S606. The HP domain maps to 614–682 (MREYKIYPYE…NELKKQARLF (69 aa)). R630 carries the omega-N-methylarginine modification.

Directly interacts with F-actin and ABRA. As to expression, expressed in heart, brain, lung and liver. In the brain, highly expressed in the olfactory bulb. In the hippocampus, expressed selectively in the CA2 and CA3 fields. In the cerebellum, expressed in internal granular cells.

The protein resides in the cytoplasm. Its function is as follows. May act as scaffold protein. May stimulate ABRA activity and ABRA-dependent SRF transcriptional activity. The protein is Actin-binding LIM protein 3 (Ablim3) of Mus musculus (Mouse).